The chain runs to 432 residues: Ribosomal protein uS12 methylthiotransferase RimO (432 aa).

The MTTase N-terminal domain occupies 2-115; sequence IRVAVITLGC…LPEIINRVLK (114 aa). [4Fe-4S] cluster is bound by residues cysteine 11, cysteine 47, cysteine 78, cysteine 151, cysteine 155, and cysteine 158. The Radical SAM core domain occupies 137 to 367; sequence EDGKPFAYLK…MLHQQSITRA (231 aa).

Belongs to the methylthiotransferase family. RimO subfamily. It depends on [4Fe-4S] cluster as a cofactor.

It is found in the cytoplasm. The enzyme catalyses L-aspartate(89)-[ribosomal protein uS12]-hydrogen + (sulfur carrier)-SH + AH2 + 2 S-adenosyl-L-methionine = 3-methylsulfanyl-L-aspartate(89)-[ribosomal protein uS12]-hydrogen + (sulfur carrier)-H + 5'-deoxyadenosine + L-methionine + A + S-adenosyl-L-homocysteine + 2 H(+). Functionally, catalyzes the methylthiolation of an aspartic acid residue of ribosomal protein uS12. The polypeptide is Ribosomal protein uS12 methylthiotransferase RimO (Moorella thermoacetica (strain ATCC 39073 / JCM 9320)).